A 382-amino-acid chain; its full sequence is Processive diacylglycerol beta-glucosyltransferase (382 aa).

It belongs to the glycosyltransferase 28 family. UgtP subfamily.

The protein resides in the cell membrane. The catalysed reaction is a 1,2-diacyl-3-O-(beta-D-glucopyranosyl)-sn-glycerol + UDP-alpha-D-glucose = a 1,2-diacyl-3-O-(beta-D-Glc-(1-&gt;6)-beta-D-Glc)-sn-glycerol + UDP + H(+). The enzyme catalyses a 1,2-diacyl-3-O-(beta-D-Glc-(1-&gt;6)-beta-D-Glc)-sn-glycerol + UDP-alpha-D-glucose = a 1,2-diacyl-3-O-(beta-D-Glc-(1-&gt;6)-beta-D-Glc-(1-&gt;6)-beta-D-Glc)-sn-glycerol + UDP + H(+). It catalyses the reaction a 1,2-diacyl-sn-glycerol + UDP-alpha-D-glucose = a 1,2-diacyl-3-O-(beta-D-glucopyranosyl)-sn-glycerol + UDP + H(+). The protein operates within glycolipid metabolism; diglucosyl-diacylglycerol biosynthesis. Its function is as follows. Processive glucosyltransferase involved in the biosynthesis of both the bilayer- and non-bilayer-forming membrane glucolipids. Is able to successively transfer up to three glucosyl residues to diacylglycerol (DAG), thereby catalyzing the formation of beta-monoglucosyl-DAG (3-O-(beta-D-glucopyranosyl)-1,2-diacyl-sn-glycerol), beta-diglucosyl-DAG (3-O-(beta-D-glucopyranosyl-beta-(1-&gt;6)-D-glucopyranosyl)-1,2-diacyl-sn-glycerol) and beta-triglucosyl-DAG (3-O-(beta-D-glucopyranosyl-beta-(1-&gt;6)-D-glucopyranosyl-beta-(1-&gt;6)-D-glucopyranosyl)-1,2-diacyl-sn-glycerol). Beta-diglucosyl-DAG is the predominant glycolipid found in Bacillales and is also used as a membrane anchor for lipoteichoic acid (LTA). Also seems to be able to form beta-tetraglucosyl-DAG, although this glycolipid has not been found in B.subtilis membrane. UgtP can only use UDP-glucose as sugar donor. The sequence is that of Processive diacylglycerol beta-glucosyltransferase from Bacillus subtilis (strain 168).